The chain runs to 135 residues: Large ribosomal subunit protein bL21 (135 aa).

Over residues 109–128 (TLATAQSAPPSTSEATTDTT) the composition is skewed to polar residues. The interval 109–135 (TLATAQSAPPSTSEATTDTTGIPAAEE) is disordered.

The protein belongs to the bacterial ribosomal protein bL21 family. In terms of assembly, part of the 50S ribosomal subunit. Contacts protein L20.

Its function is as follows. This protein binds to 23S rRNA in the presence of protein L20. The sequence is that of Large ribosomal subunit protein bL21 from Synechococcus sp. (strain JA-3-3Ab) (Cyanobacteria bacterium Yellowstone A-Prime).